We begin with the raw amino-acid sequence, 249 residues long: Chitooligosaccharide deacetylase (249 aa).

Mg(2+) contacts are provided by His-61 and His-125.

The protein belongs to the YdjC deacetylase family. ChbG subfamily. As to quaternary structure, homodimer. It depends on Mg(2+) as a cofactor.

The protein localises to the cytoplasm. The enzyme catalyses N,N'-diacetylchitobiose + H2O = N-acetyl-beta-D-glucosaminyl-(1-&gt;4)-D-glucosamine + acetate. It catalyses the reaction diacetylchitobiose-6'-phosphate + H2O = N'-monoacetylchitobiose-6'-phosphate + acetate. It functions in the pathway glycan degradation; chitin degradation. Involved in the degradation of chitin. ChbG is essential for growth on the acetylated chitooligosaccharides chitobiose and chitotriose but is dispensable for growth on cellobiose and chitosan dimer, the deacetylated form of chitobiose. Deacetylation of chitobiose-6-P and chitotriose-6-P is necessary for both the activation of the chb promoter by the regulatory protein ChbR and the hydrolysis of phosphorylated beta-glucosides by the phospho-beta-glucosidase ChbF. Catalyzes the removal of only one acetyl group from chitobiose-6-P to yield monoacetylchitobiose-6-P, the inducer of ChbR and the substrate of ChbF. The sequence is that of Chitooligosaccharide deacetylase from Escherichia coli (strain K12 / MC4100 / BW2952).